Consider the following 433-residue polypeptide: SPI-2 type 3 secretion system ATPase (433 aa).

165–170 (GVGKST) provides a ligand contact to ATP.

This sequence belongs to the ATPase alpha/beta chains family. T3SS ATPase subfamily. In terms of assembly, the core secretion machinery of the T3SS is composed of approximately 20 different proteins, including cytoplasmic components, a base, an export apparatus and a needle. This subunit is part of the cytosolic complex. Forms homohexamers. Forms a complex with SsaK/SctL (stator protein) and SsaQ/SctQ (the major sorting platform component). Interacts with the T3SS-2 specific chaperones SsaE, SseA, SscA, SscB, and SrcA.

Its subcellular location is the cytoplasm. The catalysed reaction is ATP + H2O + cellular proteinSide 1 = ADP + phosphate + cellular proteinSide 2.. Its function is as follows. ATPase component of the type III secretion system (T3SS), also called injectisome, which is used to inject bacterial effector proteins into eukaryotic host cells. Acts as a molecular motor to provide the energy that is required for the export of proteins. Required for type III secretion apparatus (T3SA) formation, secretion of a subset of SPI-2 effectors and virulence. May play a critical role in T3SS substrate recognition, disassembly of the effector/chaperone complex and unfolding of the effector in an ATP-dependent manner prior to secretion. Releases the effector protein SseB from the T3SS-2 specific chaperone SsaE in an ATP-dependent manner. The protein is SPI-2 type 3 secretion system ATPase of Salmonella typhimurium (strain LT2 / SGSC1412 / ATCC 700720).